Reading from the N-terminus, the 128-residue chain is Insulin-like 3 (128 aa).

An N-terminal signal peptide occupies residues 1–15 (MHALLLLLLLALGSA). 3 disulfide bridges follow: C29-C113, C41-C126, and C112-C117. Residues 81-94 (ALDPDPALDPQLPH) are compositionally biased toward low complexity. The disordered stretch occupies residues 81–101 (ALDPDPALDPQLPHQASQRQR).

Belongs to the insulin family. In terms of assembly, heterodimer of a B chain and an A chain linked by two disulfide bonds. In terms of tissue distribution, expressed in Leydig cells of the testis, and weakly in the theca interna cells of antral follicles and the corpus luteum of the ovary.

It localises to the secreted. In terms of biological role, seems to play a role in testicular function. May be a trophic hormone with a role in testicular descent in fetal life. Is a ligand for LGR8 receptor. This Rattus norvegicus (Rat) protein is Insulin-like 3 (Insl3).